We begin with the raw amino-acid sequence, 236 residues long: ATP synthase subunit 4, mitochondrial (236 aa).

The transit peptide at 1–29 (MAFRALTTKAAARPLLALGPRSVAMGARY) directs the protein to the mitochondrion.

The protein belongs to the eukaryotic ATPase subunit B family. F-type ATPases have 2 components, CF(1) - the catalytic core - and CF(0) - the membrane proton channel. In yeast, the dimeric form of ATP synthase consists of 17 polypeptides: alpha, beta, gamma, delta, epsilon, 4 (B), 5 (OSCP), 6 (A), 8, 9 (C), d, E (Tim11), f, g, h, i/j and k.

The protein resides in the mitochondrion. The protein localises to the mitochondrion inner membrane. Functionally, mitochondrial membrane ATP synthase (F(1)F(0) ATP synthase or Complex V) produces ATP from ADP in the presence of a proton gradient across the membrane which is generated by electron transport complexes of the respiratory chain. F-type ATPases consist of two structural domains, F(1) - containing the extramembraneous catalytic core, and F(0) - containing the membrane proton channel, linked together by a central stalk and a peripheral stalk. During catalysis, ATP synthesis in the catalytic domain of F(1) is coupled via a rotary mechanism of the central stalk subunits to proton translocation. Part of the complex F(0) domain and the peripheric stalk, which acts as a stator to hold the catalytic alpha(3)beta(3) subcomplex and subunit a/ATP6 static relative to the rotary elements. In Eremothecium gossypii (strain ATCC 10895 / CBS 109.51 / FGSC 9923 / NRRL Y-1056) (Yeast), this protein is ATP synthase subunit 4, mitochondrial (ATP4).